A 387-amino-acid chain; its full sequence is MKNVVIVDCIRTPMGRSKNGVFRHTRAEDLSAHLMKGLLKRNPSVDPNDIEDIYWGCVQQTLEQGFNIARNSALLAGLPQSIAATTVNRLCGSSMQALHDASRAIMVGDAEICIIGGVEHMGHVPMNHGVDFHSGLSKSVAKASGMMGLTAEMLGKMHGISREQQDAFALASHQKAHKATIEGYFDSEILPMEGHDENGALTLVTHDEVIRPETTLEGLAALRPAFDPANGTVTAGSSSALSDGASAMLVMSEEKANELGLPIRAKVRSMAVSGCDPSIMGYGPVPATKKALKRAGLSLDDIELFELNEAFAAQSLPCIKDLGLLDVMDEKVNLNGGAIALGHPLGCSGSRIATTLINNMERTGAKLGVATMCIGLGQGIATVFERP.

Cys-91 serves as the catalytic Acyl-thioester intermediate. Residues His-343 and Cys-373 each act as proton acceptor in the active site.

The protein belongs to the thiolase-like superfamily. Thiolase family. As to quaternary structure, heterotetramer of two alpha chains (FadB) and two beta chains (FadA).

The protein resides in the cytoplasm. It catalyses the reaction an acyl-CoA + acetyl-CoA = a 3-oxoacyl-CoA + CoA. It functions in the pathway lipid metabolism; fatty acid beta-oxidation. Catalyzes the final step of fatty acid oxidation in which acetyl-CoA is released and the CoA ester of a fatty acid two carbons shorter is formed. This chain is 3-ketoacyl-CoA thiolase, found in Aliivibrio fischeri (strain ATCC 700601 / ES114) (Vibrio fischeri).